The following is a 440-amino-acid chain: Protein TENP (440 aa).

In terms of tissue distribution, expressed in developing retina and brain, but not in heart, liver or kidney. In brain, located in a narrow strip in the boundary between the ventricular zone (consisting of proliferating cells) and the intermediate zone (consisting of postmitotic, differentiating cells). Expressed in all major regions of the developing brain, including the myelencephalon, the mesencephalon, the telencephalon and the diencephalon. In the developing retina, expression is scattered across the retinal neural epithelium. Expressed in egg white (at protein level). Expressed in the magnum of the oviduct (at protein level).

May play a role in the developmental transition from cell proliferation to cell differentiation during neurogenesis. The protein is Protein TENP (TENP) of Gallus gallus (Chicken).